The primary structure comprises 380 residues: NF-kappa-B inhibitor-like protein 1 (380 aa).

Residues 1 to 34 form a disordered region; the sequence is MSNPSPQVPEGEASTSVCRPKSSMASTSRRQRRE. The segment covering 13 to 28 has biased composition (polar residues); the sequence is ASTSVCRPKSSMASTS. ANK repeat units lie at residues 64–93 and 97–133; these read GQPP…DPAH and HGDT…IKNK. 2 disordered regions span residues 131–167 and 185–293; these read KNKD…EWRQ and EDDA…RGSL. At serine 150 the chain carries Phosphoserine. The segment covering 150–159 has biased composition (acidic residues); the sequence is SAEEEEEDEA. Basic and acidic residues-rich tracts occupy residues 204–221 and 236–272; these read RMAR…ETEG and RQQE…RDPV.

Interacts with CACTIN (via N-terminal domain); the interaction occurs in a pro-inflammatory-independent manner.

Its subcellular location is the nucleus. Its function is as follows. Involved in the regulation of innate immune response. Acts as negative regulator of Toll-like receptor and interferon-regulatory factor (IRF) signaling pathways. Contributes to the negative regulation of transcriptional activation of NF-kappa-B target genes in response to endogenous pro-inflammatory stimuli. The polypeptide is NF-kappa-B inhibitor-like protein 1 (NFKBIL1) (Sus scrofa (Pig)).